A 297-amino-acid polypeptide reads, in one-letter code: AKT-interacting protein (297 aa).

Polar residues predominate over residues 1 to 13; it reads MNLNPFWSMSTNT. Positions 1-45 are disordered; that stretch reads MNLNPFWSMSTNTGRKRSDGEEQSGEQQQQQRASPARPSFGKKQL. The span at 25 to 39 shows a compositional bias: low complexity; sequence GEQQQQQRASPARPS. A UBC core domain is found at 79–227; that stretch reads YLEYSLLAEF…VVDSVKLCNS (149 aa). Residues 262 to 297 are disordered; it reads KRRPEDHHKGLQVSGLSWVKPGSTQPFSKDDNPPQN.

Belongs to the ubiquitin-conjugating enzyme family. FTS subfamily.

The protein localises to the cytoplasm. It localises to the cell membrane. May function to promote vesicle trafficking and/or fusion. May also regulate apoptosis. This is AKT-interacting protein (aktip) from Salmo salar (Atlantic salmon).